Consider the following 469-residue polypeptide: Glutamine synthetase (469 aa).

Residues 15 to 96 (NDVKFIDVRF…INFFIHDPIT (82 aa)) enclose the GS beta-grasp domain. In terms of domain architecture, GS catalytic spans 104-469 (PRNIAKKAEA…PHEFELYFDI (366 aa)). Mg(2+) contacts are provided by Glu-129 and Glu-131. Position 205 (Glu-205) interacts with ATP. The Mg(2+) site is built by Glu-210 and Glu-218. Residue 221-223 (YKF) participates in ATP binding. Residues 262-263 (NG) and Gly-263 contribute to the L-glutamate site. His-267 contributes to the Mg(2+) binding site. ATP contacts are provided by residues 269–271 (HQS) and Ser-271. Residues Arg-320, Glu-326, and Arg-338 each contribute to the L-glutamate site. Residues Arg-338, Arg-343, and Lys-352 each coordinate ATP. Glu-357 is a binding site for Mg(2+). L-glutamate is bound at residue Arg-359. Position 397 is an O-AMP-tyrosine (Tyr-397).

Belongs to the glutamine synthetase family. Oligomer of 12 subunits arranged in the form of two hexagons. The cofactor is Mg(2+).

The protein resides in the cytoplasm. The catalysed reaction is L-glutamate + NH4(+) + ATP = L-glutamine + ADP + phosphate + H(+). With respect to regulation, the activity of this enzyme could be controlled by adenylation under conditions of abundant glutamine. In terms of biological role, catalyzes the ATP-dependent biosynthesis of glutamine from glutamate and ammonia. The polypeptide is Glutamine synthetase (Streptomyces filamentosus (Streptomyces roseosporus)).